The chain runs to 335 residues: Stearoyl-CoA desaturase 5 (335 aa).

Residues 1-54 are Cytoplasmic-facing; that stretch reads MPGPAVDAEKVPFRSAKEEIRAGVGVEGSEGGGGGGGRERPGARGHRQDIVWRN. Residues 24–44 are disordered; sequence VGVEGSEGGGGGGGRERPGAR. Over residues 25–36 the composition is skewed to gly residues; sequence GVEGSEGGGGGG. N54 contacts substrate. The helical transmembrane segment at 55 to 75 threads the bilayer; the sequence is VFLMSLLHLAAVYSLVLIPKA. Residues 76 to 77 are Lumenal-facing; the sequence is QP. A helical membrane pass occupies residues 78–98; it reads LTLLWAYFCFLLTALGVTAGA. Fe cation contacts are provided by H99 and H104. Residues 99–104 carry the Histidine box-1 motif; it reads HRLWSH. The Cytoplasmic segment spans residues 99-198; it reads HRLWSHRSYK…VVRFQRKYYK (100 aa). Positions 127, 134, and 135 each coordinate substrate. The Fe cation site is built by H136, H139, and H140. The short motif at 136-140 is the Histidine box-2 element; it reads HRVHH. R167 and K168 together coordinate substrate. Residues 199 to 219 traverse the membrane as a helical segment; that stretch reads ITVVLMCFVVPTLVPWYIWGE. The Lumenal segment spans residues 220-227; that stretch reads SLWNSYFL. The helical transmembrane segment at 228–247 threads the bilayer; it reads ASILRYTISLNVTWLVNSVA. W241 contributes to the substrate binding site. Fe cation is bound by residues H248, H277, H280, and H281. At 248 to 335 the chain is on the cytoplasmic side; sequence HMYGNRPYDK…RKARTGDGSA (88 aa). A Histidine box-3 motif is present at residues 277–281; that stretch reads HNYHH.

This sequence belongs to the fatty acid desaturase type 1 family. As to quaternary structure, may self-associate and form homodimers. The cofactor is Fe(2+). As to expression, detected in brain.

The protein resides in the endoplasmic reticulum membrane. It catalyses the reaction octadecanoyl-CoA + 2 Fe(II)-[cytochrome b5] + O2 + 2 H(+) = (9Z)-octadecenoyl-CoA + 2 Fe(III)-[cytochrome b5] + 2 H2O. The enzyme catalyses hexadecanoyl-CoA + 2 Fe(II)-[cytochrome b5] + O2 + 2 H(+) = (9Z)-hexadecenoyl-CoA + 2 Fe(III)-[cytochrome b5] + 2 H2O. Stearoyl-CoA desaturase that utilizes O(2) and electrons from reduced cytochrome b5 to introduce the first double bond into saturated fatty acyl-CoA substrates. Catalyzes the insertion of a cis double bond at the delta-9 position into fatty acyl-CoA substrates including palmitoyl-CoA and stearoyl-CoA. Gives rise to a mixture of 16:1 and 18:1 unsaturated fatty acids. Involved in neuronal cell proliferation and differentiation through down-regulation of EGFR/AKT/MAPK and Wnt signaling pathways. The polypeptide is Stearoyl-CoA desaturase 5 (SCD5) (Bos taurus (Bovine)).